Consider the following 459-residue polypeptide: ATP-dependent protease ATPase subunit HslU (459 aa).

ATP contacts are provided by residues Val21, 63-68 (GVGKTE), Asp273, Glu338, and Arg410.

The protein belongs to the ClpX chaperone family. HslU subfamily. A double ring-shaped homohexamer of HslV is capped on each side by a ring-shaped HslU homohexamer. The assembly of the HslU/HslV complex is dependent on binding of ATP.

Its subcellular location is the cytoplasm. Its function is as follows. ATPase subunit of a proteasome-like degradation complex; this subunit has chaperone activity. The binding of ATP and its subsequent hydrolysis by HslU are essential for unfolding of protein substrates subsequently hydrolyzed by HslV. HslU recognizes the N-terminal part of its protein substrates and unfolds these before they are guided to HslV for hydrolysis. This is ATP-dependent protease ATPase subunit HslU from Thermosipho africanus (strain TCF52B).